The following is a 213-amino-acid chain: Protein-L-isoaspartate O-methyltransferase (213 aa).

Residue S58 is part of the active site.

Belongs to the methyltransferase superfamily. L-isoaspartyl/D-aspartyl protein methyltransferase family.

It localises to the cytoplasm. The catalysed reaction is [protein]-L-isoaspartate + S-adenosyl-L-methionine = [protein]-L-isoaspartate alpha-methyl ester + S-adenosyl-L-homocysteine. Its function is as follows. Catalyzes the methyl esterification of L-isoaspartyl residues in peptides and proteins that result from spontaneous decomposition of normal L-aspartyl and L-asparaginyl residues. It plays a role in the repair and/or degradation of damaged proteins. In Chlorobaculum tepidum (strain ATCC 49652 / DSM 12025 / NBRC 103806 / TLS) (Chlorobium tepidum), this protein is Protein-L-isoaspartate O-methyltransferase.